A 164-amino-acid chain; its full sequence is Polygalacturonase (164 aa).

The protein belongs to the glycosyl hydrolase 28 family.

It is found in the secreted. The protein resides in the cell wall. It catalyses the reaction (1,4-alpha-D-galacturonosyl)n+m + H2O = (1,4-alpha-D-galacturonosyl)n + (1,4-alpha-D-galacturonosyl)m.. This Cupressus sempervirens (Italian cypress) protein is Polygalacturonase.